The following is a 450-amino-acid chain: DNA primase DnaG (450 aa).

The Toprim domain occupies 199–273 (DSIIVVEGRA…DVDYVARAPE (75 aa)). Mg(2+)-binding residues include glutamate 205, aspartate 247, and aspartate 249. A compositionally biased stretch (basic and acidic residues) spans 320-348 (APSKEVKPAPKHEPKPQPVEQKPREEKII). A disordered region spans residues 320–350 (APSKEVKPAPKHEPKPQPVEQKPREEKIIRP).

It belongs to the archaeal DnaG primase family. As to quaternary structure, forms a ternary complex with MCM helicase and DNA. Component of the archaeal exosome complex. Mg(2+) serves as cofactor.

It carries out the reaction ssDNA + n NTP = ssDNA/pppN(pN)n-1 hybrid + (n-1) diphosphate.. Functionally, RNA polymerase that catalyzes the synthesis of short RNA molecules used as primers for DNA polymerase during DNA replication. Also part of the exosome, which is a complex involved in RNA degradation. Acts as a poly(A)-binding protein that enhances the interaction between heteromeric, adenine-rich transcripts and the exosome. The polypeptide is DNA primase DnaG (Thermococcus gammatolerans (strain DSM 15229 / JCM 11827 / EJ3)).